The sequence spans 137 residues: Phosphoribosyl-ATP pyrophosphatase (137 aa).

Residues 114 to 124 (EGTSGIEEKAL) show a composition bias toward basic and acidic residues. Residues 114–137 (EGTSGIEEKALRKSLQRAAEEAQP) form a disordered region.

The protein belongs to the PRA-PH family.

Its subcellular location is the cytoplasm. The catalysed reaction is 1-(5-phospho-beta-D-ribosyl)-ATP + H2O = 1-(5-phospho-beta-D-ribosyl)-5'-AMP + diphosphate + H(+). It participates in amino-acid biosynthesis; L-histidine biosynthesis; L-histidine from 5-phospho-alpha-D-ribose 1-diphosphate: step 2/9. This chain is Phosphoribosyl-ATP pyrophosphatase, found in Paracidovorax citrulli (strain AAC00-1) (Acidovorax citrulli).